Reading from the N-terminus, the 476-residue chain is Siroheme synthase (476 aa).

The tract at residues 1–204 (MDYFPVFLNI…GKDQAAQDYL (204 aa)) is precorrin-2 dehydrogenase /sirohydrochlorin ferrochelatase. NAD(+) is bound by residues 22 to 23 (SV) and 43 to 44 (PT). S129 is modified (phosphoserine). The segment at 218-476 (GEVYLVGAGP…GNTPGYSKHP (259 aa)) is uroporphyrinogen-III C-methyltransferase. P227 is a binding site for S-adenosyl-L-methionine. D250 (proton acceptor) is an active-site residue. K272 (proton donor) is an active-site residue. S-adenosyl-L-methionine contacts are provided by residues 303–305 (GGD), I308, 333–334 (TA), M385, and G414.

It in the N-terminal section; belongs to the precorrin-2 dehydrogenase / sirohydrochlorin ferrochelatase family. This sequence in the C-terminal section; belongs to the precorrin methyltransferase family.

The enzyme catalyses uroporphyrinogen III + 2 S-adenosyl-L-methionine = precorrin-2 + 2 S-adenosyl-L-homocysteine + H(+). It carries out the reaction precorrin-2 + NAD(+) = sirohydrochlorin + NADH + 2 H(+). It catalyses the reaction siroheme + 2 H(+) = sirohydrochlorin + Fe(2+). It participates in cofactor biosynthesis; adenosylcobalamin biosynthesis; precorrin-2 from uroporphyrinogen III: step 1/1. It functions in the pathway cofactor biosynthesis; adenosylcobalamin biosynthesis; sirohydrochlorin from precorrin-2: step 1/1. The protein operates within porphyrin-containing compound metabolism; siroheme biosynthesis; precorrin-2 from uroporphyrinogen III: step 1/1. Its pathway is porphyrin-containing compound metabolism; siroheme biosynthesis; siroheme from sirohydrochlorin: step 1/1. It participates in porphyrin-containing compound metabolism; siroheme biosynthesis; sirohydrochlorin from precorrin-2: step 1/1. In terms of biological role, multifunctional enzyme that catalyzes the SAM-dependent methylations of uroporphyrinogen III at position C-2 and C-7 to form precorrin-2 via precorrin-1. Then it catalyzes the NAD-dependent ring dehydrogenation of precorrin-2 to yield sirohydrochlorin. Finally, it catalyzes the ferrochelation of sirohydrochlorin to yield siroheme. In Nitrosomonas eutropha (strain DSM 101675 / C91 / Nm57), this protein is Siroheme synthase.